The primary structure comprises 906 residues: Cadherin-2 (906 aa).

The first 25 residues, 1–25, serve as a signal peptide directing secretion; that stretch reads MCRIVGAPRTLLPLLAALLQASVDA. Positions 26 to 159 are excised as a propeptide; sequence SGEISLCKTG…HNGYLQRQKR (134 aa). 2 positions are modified to phosphoserine: S96 and S135. Cadherin domains follow at residues 160-267, 268-392, 393-497, 498-603, and 604-714; these read DWVI…RPEF, LHQV…GEVP, ENRV…NPYF, APNP…DNAP, and QVLP…DVDR. Residues 160–724 lie on the Extracellular side of the membrane; sequence DWVIPPINLP…IVGAGLGTGA (565 aa). E170 lines the Ca(2+) pocket. A glycan (N-linked (GlcNAc...) asparagine) is linked at N190. D226, E228, D259, M260, N261, D262, and N263 together coordinate Ca(2+). An N-linked (GlcNAc...) asparagine glycan is attached at N273. Residues D293, D295, and N301 each coordinate Ca(2+). N325 carries an N-linked (GlcNAc...) asparagine glycan. Residue D353 coordinates Ca(2+). Residues N357, N402, N572, N622, N651, and N692 are each glycosylated (N-linked (GlcNAc...) asparagine). A helical transmembrane segment spans residues 725-746; it reads IIAILLCIIILLILVLMFVVWM. Residues 747–906 lie on the Cytoplasmic side of the membrane; the sequence is KRRDKERQAK…LADMYGGGDD (160 aa). The span at 863–880 shows a compositional bias: low complexity; sequence SGSTAGSLSSLNSSSSGG. Residues 863 to 884 form a disordered region; the sequence is SGSTAGSLSSLNSSSSGGEQDY.

Homodimer (via extracellular region). Can also form heterodimers with other cadherins (via extracellular region). Dimerization occurs in trans, i.e. with a cadherin chain from another cell. Interacts with CDCP1. Interacts with PCDH8; this complex may also include TAOK2. The interaction with PCDH8 may lead to internalization through TAOK2/p38 MAPK pathway. Identified in a complex containing FGFR4, NCAM1, CDH2, PLCG1, FRS2, SRC, SHC1, GAP43 and CTTN. May interact with OBSCN (via protein kinase domain 2). Interacts with FBXO45. In terms of processing, cleaved by MMP24. Ectodomain cleavage leads to the generation of a soluble 90 kDa N-terminal soluble fragment and a 45 kDa membrane-bound C-terminal fragment 1 (CTF1), which is further cleaved by gamma-secretase into a 35 kDa. Cleavage in neural stem cells by MMP24 affects CDH2-mediated anchorage of neural stem cells to ependymocytes in the adult subependymal zone, leading to modulate neural stem cell quiescence. Post-translationally, may be phosphorylated by OBSCN. In terms of tissue distribution, detected in liver, kidney, heart and brain capillaries.

The protein localises to the cell membrane. Its subcellular location is the sarcolemma. The protein resides in the cell junction. It localises to the cell surface. It is found in the desmosome. The protein localises to the adherens junction. Calcium-dependent cell adhesion protein; preferentially mediates homotypic cell-cell adhesion by dimerization with a CDH2 chain from another cell. Cadherins may thus contribute to the sorting of heterogeneous cell types. Acts as a regulator of neural stem cells quiescence by mediating anchorage of neural stem cells to ependymocytes in the adult subependymal zone: upon cleavage by MMP24, CDH2-mediated anchorage is affected, leading to modulate neural stem cell quiescence. Plays a role in cell-to-cell junction formation between pancreatic beta cells and neural crest stem (NCS) cells, promoting the formation of processes by NCS cells. Required for proper neurite branching. Required for pre- and postsynaptic organization. CDH2 may be involved in neuronal recognition mechanism. In hippocampal neurons, may regulate dendritic spine density. The sequence is that of Cadherin-2 (CDH2) from Bos taurus (Bovine).